Here is a 231-residue protein sequence, read N- to C-terminus: Large ribosomal subunit protein uL1 (231 aa).

This sequence belongs to the universal ribosomal protein uL1 family. Part of the 50S ribosomal subunit.

Its function is as follows. Binds directly to 23S rRNA. The L1 stalk is quite mobile in the ribosome, and is involved in E site tRNA release. Protein L1 is also a translational repressor protein, it controls the translation of the L11 operon by binding to its mRNA. The polypeptide is Large ribosomal subunit protein uL1 (Pseudomonas putida (strain ATCC 700007 / DSM 6899 / JCM 31910 / BCRC 17059 / LMG 24140 / F1)).